A 357-amino-acid polypeptide reads, in one-letter code: Protein-glutamate methylesterase/protein-glutamine glutaminase 1 (357 aa).

The Response regulatory domain occupies 7 to 125 (RAVIIDDSLL…QFDPEEIGNI (119 aa)). Asp-58 carries the post-translational modification 4-aspartylphosphate. Residues 162–344 (KKSPIQAICI…VEYIEPVTEI (183 aa)) form the CheB-type methylesterase domain. Catalysis depends on residues Ser-174, His-201, and Asp-297.

The protein belongs to the CheB family. Phosphorylated by CheA. Phosphorylation of the N-terminal regulatory domain activates the methylesterase activity.

The protein localises to the cytoplasm. The catalysed reaction is [protein]-L-glutamate 5-O-methyl ester + H2O = L-glutamyl-[protein] + methanol + H(+). It catalyses the reaction L-glutaminyl-[protein] + H2O = L-glutamyl-[protein] + NH4(+). In terms of biological role, involved in chemotaxis. Part of a chemotaxis signal transduction system that modulates chemotaxis in response to various stimuli. Catalyzes the demethylation of specific methylglutamate residues introduced into the chemoreceptors (methyl-accepting chemotaxis proteins or MCP) by CheR. Also mediates the irreversible deamidation of specific glutamine residues to glutamic acid. This chain is Protein-glutamate methylesterase/protein-glutamine glutaminase 1, found in Leptospira interrogans serogroup Icterohaemorrhagiae serovar Lai (strain 56601).